A 300-amino-acid chain; its full sequence is Oxidoreductase BOA1 (300 aa).

This sequence belongs to the NmrA-type oxidoreductase family. Isoflavone reductase subfamily.

Its pathway is polyketide biosynthesis. In terms of biological role, oxidoreductase; part of the gene cluster A that mediates the biosynthesis of botcinic acid and its botcinin derivatives, acetate-derived polyketides that contribute to virulence when combined with the sesquiterpene botrydial. Botcinic acid and its derivatives have been shown to induce chlorosis and necrosis during host plant infection, but also have antifungal activities. Two polyketide synthases, BOA6 and BOA9, are involved in the biosynthesis of botcinins. BOA6 mediates the formation of the per-methylated tetraketide core by condensation of four units of malonyl-CoA with one unit of acetyl-CoA, which would be methylated in activated methylene groups to yield a bicyclic acid intermediate that could then either be converted to botrylactone derivatives or lose the starter acetate unit through a retro-Claisen type C-C bond cleavage to yield botcinin derivatives. The second polyketide synthase, BOA9, is probably required for the biosynthesis of the tetraketide side chain of botcinins. The methyltransferase (MT) domain within BOA6 is probably responsible for the incorporation of four methyl groups. The trans-enoyl reductase BOA5 might take over the enoyl reductase function of BOA6 that misses an ER domain. The monooxygenases BOA2, BOA3 and BOA4 might be involved in further hydroxylations at C4, C5 and C8, whereas BOA7, close to BOA9, could potentially be involved in the hydroxylation at C4 in the side chain of botcinins. This chain is Oxidoreductase BOA1, found in Botryotinia fuckeliana (strain B05.10) (Noble rot fungus).